Here is a 117-residue protein sequence, read N- to C-terminus: Large ribosomal subunit protein uL18 (117 aa).

It belongs to the universal ribosomal protein uL18 family. In terms of assembly, part of the 50S ribosomal subunit; part of the 5S rRNA/L5/L18/L25 subcomplex. Contacts the 5S and 23S rRNAs.

Its function is as follows. This is one of the proteins that bind and probably mediate the attachment of the 5S RNA into the large ribosomal subunit, where it forms part of the central protuberance. This chain is Large ribosomal subunit protein uL18, found in Vibrio cholerae serotype O1 (strain ATCC 39541 / Classical Ogawa 395 / O395).